Consider the following 405-residue polypeptide: Probable tRNA sulfurtransferase (405 aa).

A THUMP domain is found at 60 to 165 (EPVNDRLKVV…QDGAYISNQL (106 aa)). ATP contacts are provided by residues 183-184 (ML), 208-209 (HF), Arg-265, Gly-287, and Gln-296.

The protein belongs to the ThiI family.

The protein resides in the cytoplasm. It catalyses the reaction [ThiI sulfur-carrier protein]-S-sulfanyl-L-cysteine + a uridine in tRNA + 2 reduced [2Fe-2S]-[ferredoxin] + ATP + H(+) = [ThiI sulfur-carrier protein]-L-cysteine + a 4-thiouridine in tRNA + 2 oxidized [2Fe-2S]-[ferredoxin] + AMP + diphosphate. The catalysed reaction is [ThiS sulfur-carrier protein]-C-terminal Gly-Gly-AMP + S-sulfanyl-L-cysteinyl-[cysteine desulfurase] + AH2 = [ThiS sulfur-carrier protein]-C-terminal-Gly-aminoethanethioate + L-cysteinyl-[cysteine desulfurase] + A + AMP + 2 H(+). It functions in the pathway cofactor biosynthesis; thiamine diphosphate biosynthesis. Catalyzes the ATP-dependent transfer of a sulfur to tRNA to produce 4-thiouridine in position 8 of tRNAs, which functions as a near-UV photosensor. Also catalyzes the transfer of sulfur to the sulfur carrier protein ThiS, forming ThiS-thiocarboxylate. This is a step in the synthesis of thiazole, in the thiamine biosynthesis pathway. The sulfur is donated as persulfide by IscS. In Lactobacillus delbrueckii subsp. bulgaricus (strain ATCC BAA-365 / Lb-18), this protein is Probable tRNA sulfurtransferase.